Reading from the N-terminus, the 151-residue chain is Large ribosomal subunit protein uL15 (151 aa).

The disordered stretch occupies residues 1 to 60 (MAENSPLKAHNLRPAPGAKTAKTRVGRGEASKGKTAGRGTKGTKARYQVPERFEGGQMPL).

Belongs to the universal ribosomal protein uL15 family. As to quaternary structure, part of the 50S ribosomal subunit.

Functionally, binds to the 23S rRNA. The protein is Large ribosomal subunit protein uL15 of Streptomyces griseus subsp. griseus (strain JCM 4626 / CBS 651.72 / NBRC 13350 / KCC S-0626 / ISP 5235).